Here is a 112-residue protein sequence, read N- to C-terminus: Protein Churchill (112 aa).

Positions 2, 5, 30, 33, 59, 61, 64, 66, 71, 88, and 91 each coordinate Zn(2+).

This sequence belongs to the Churchill family.

Transcriptional activator that mediates FGF signaling during neural development. Plays a role in the regulation of cell movement. Does not bind DNA by itself. The sequence is that of Protein Churchill (CHURC1) from Bos taurus (Bovine).